Reading from the N-terminus, the 323-residue chain is tRNA dimethylallyltransferase (323 aa).

12-19 (GPTASGKT) is an ATP binding site. Position 14–19 (14–19 (TASGKT)) interacts with substrate. 2 interaction with substrate tRNA regions span residues 37–40 (DSAL) and 161–165 (QRLVR).

This sequence belongs to the IPP transferase family. Monomer. Mg(2+) is required as a cofactor.

The catalysed reaction is adenosine(37) in tRNA + dimethylallyl diphosphate = N(6)-dimethylallyladenosine(37) in tRNA + diphosphate. Its function is as follows. Catalyzes the transfer of a dimethylallyl group onto the adenine at position 37 in tRNAs that read codons beginning with uridine, leading to the formation of N6-(dimethylallyl)adenosine (i(6)A). The chain is tRNA dimethylallyltransferase from Azotobacter vinelandii (strain DJ / ATCC BAA-1303).